A 147-amino-acid polypeptide reads, in one-letter code: Large ribosomal subunit protein bL9 (147 aa).

Belongs to the bacterial ribosomal protein bL9 family.

Its function is as follows. Binds to the 23S rRNA. This Clostridium botulinum (strain ATCC 19397 / Type A) protein is Large ribosomal subunit protein bL9.